The primary structure comprises 139 residues: Ribosomal RNA large subunit methyltransferase H (139 aa).

S-adenosyl-L-methionine is bound by residues Leu57, Gly88, and 107–112 (LSAMTF).

Belongs to the RNA methyltransferase RlmH family. In terms of assembly, homodimer.

The protein localises to the cytoplasm. The enzyme catalyses pseudouridine(1915) in 23S rRNA + S-adenosyl-L-methionine = N(3)-methylpseudouridine(1915) in 23S rRNA + S-adenosyl-L-homocysteine + H(+). Specifically methylates the pseudouridine at position 1915 (m3Psi1915) in 23S rRNA. This Solibacter usitatus (strain Ellin6076) protein is Ribosomal RNA large subunit methyltransferase H.